A 248-amino-acid chain; its full sequence is 4-hydroxy-tetrahydrodipicolinate reductase (248 aa).

NAD(+) contacts are provided by residues Asp32, 74 to 76 (GTT), and 99 to 102 (SANF). Residue His134 is the Proton donor/acceptor of the active site. His135 contributes to the (S)-2,3,4,5-tetrahydrodipicolinate binding site. Lys138 acts as the Proton donor in catalysis. Residue 144–145 (GT) participates in (S)-2,3,4,5-tetrahydrodipicolinate binding.

Belongs to the DapB family.

The protein resides in the cytoplasm. It carries out the reaction (S)-2,3,4,5-tetrahydrodipicolinate + NAD(+) + H2O = (2S,4S)-4-hydroxy-2,3,4,5-tetrahydrodipicolinate + NADH + H(+). The enzyme catalyses (S)-2,3,4,5-tetrahydrodipicolinate + NADP(+) + H2O = (2S,4S)-4-hydroxy-2,3,4,5-tetrahydrodipicolinate + NADPH + H(+). The protein operates within amino-acid biosynthesis; L-lysine biosynthesis via DAP pathway; (S)-tetrahydrodipicolinate from L-aspartate: step 4/4. Catalyzes the conversion of 4-hydroxy-tetrahydrodipicolinate (HTPA) to tetrahydrodipicolinate. This Pelodictyon phaeoclathratiforme (strain DSM 5477 / BU-1) protein is 4-hydroxy-tetrahydrodipicolinate reductase.